We begin with the raw amino-acid sequence, 339 residues long: Ketol-acid reductoisomerase (NADP(+)) (339 aa).

The KARI N-terminal Rossmann domain occupies 1-182; it reads MRVYYDRDAD…GGGRSGVIET (182 aa). NADP(+) is bound by residues 24–27, Arg48, Ser51, Thr53, and 83–86; these read YGSQ and DELQ. The active site involves His108. Gly134 is an NADP(+) binding site. The KARI C-terminal knotted domain occupies 183-328; it reads TFKEECETDL…EKLRGMMPWI (146 aa). Residues Asp191, Glu195, Glu227, and Glu231 each coordinate Mg(2+). Substrate is bound at residue Ser252.

Belongs to the ketol-acid reductoisomerase family. Requires Mg(2+) as cofactor.

The enzyme catalyses (2R)-2,3-dihydroxy-3-methylbutanoate + NADP(+) = (2S)-2-acetolactate + NADPH + H(+). It catalyses the reaction (2R,3R)-2,3-dihydroxy-3-methylpentanoate + NADP(+) = (S)-2-ethyl-2-hydroxy-3-oxobutanoate + NADPH + H(+). The protein operates within amino-acid biosynthesis; L-isoleucine biosynthesis; L-isoleucine from 2-oxobutanoate: step 2/4. Its pathway is amino-acid biosynthesis; L-valine biosynthesis; L-valine from pyruvate: step 2/4. Functionally, involved in the biosynthesis of branched-chain amino acids (BCAA). Catalyzes an alkyl-migration followed by a ketol-acid reduction of (S)-2-acetolactate (S2AL) to yield (R)-2,3-dihydroxy-isovalerate. In the isomerase reaction, S2AL is rearranged via a Mg-dependent methyl migration to produce 3-hydroxy-3-methyl-2-ketobutyrate (HMKB). In the reductase reaction, this 2-ketoacid undergoes a metal-dependent reduction by NADPH to yield (R)-2,3-dihydroxy-isovalerate. The chain is Ketol-acid reductoisomerase (NADP(+)) from Brucella anthropi (strain ATCC 49188 / DSM 6882 / CCUG 24695 / JCM 21032 / LMG 3331 / NBRC 15819 / NCTC 12168 / Alc 37) (Ochrobactrum anthropi).